A 231-amino-acid polypeptide reads, in one-letter code: Red fluorescent protein eqFP611 (231 aa).

A cross-link (2-iminomethyl-5-imidazolinone (Met-Gly)) is located at residues 63 to 65 (MYG). The residue at position 64 (Y64) is a (E)-2,3-didehydrotyrosine.

This sequence belongs to the GFP family. Monomer. Post-translationally, contains a chromophore consisting of modified amino acid residues. The chromophore is formed by autocatalytic backbone condensation between Xaa-N and Gly-(N+2), oxidation of Tyr-(N+1) to didehydrotyrosine, and formation of a double bond to the alpha-amino nitrogen of residue Xaa-N. Maturation of the chromophore requires nothing other than molecular oxygen.

In terms of biological role, pigment protein. In Entacmaea quadricolor (Bubble-tip anemone), this protein is Red fluorescent protein eqFP611.